Reading from the N-terminus, the 193-residue chain is MPNWGGGKKCGVCQKTVYFAEEVQCEGNSFHKSCFLCMVCKKNLDSTTVAVHGEEIYCKSCYGKKYGPKGYGYGQGAGTLSTDKGESLGIKHEESPGHRPTTNPNASKFAQKIGGSERCPRCSQAVYAAEKVIGAGKSWHKACFRCAKCGKGLESTTLADKDGEIYCKGCYAKNFGPKGFGFGQGAGALVHSE.

The 52-residue stretch at 10–61 folds into the LIM zinc-binding 1 domain; sequence CGVCQKTVYFAEEVQCEGNSFHKSCFLCMVCKKNLDSTTVAVHGEEIYCKSC. The short motif at 64 to 69 is the Nuclear localization signal element; that stretch reads KKYGPK. Residue serine 81 is modified to Phosphoserine. Position 84 is an N6-acetyllysine (lysine 84). A Glycyl lysine isopeptide (Lys-Gly) (interchain with G-Cter in SUMO2) cross-link involves residue lysine 91. Lysine 112, lysine 131, lysine 137, and lysine 161 each carry N6-acetyllysine. Residues 119–170 enclose the LIM zinc-binding 2 domain; the sequence is CPRCSQAVYAAEKVIGAGKSWHKACFRCAKCGKGLESTTLADKDGEIYCKGC. Serine 192 is subject to Phosphoserine.

In terms of assembly, interacts with ASCC1; ASCC2 and TRIP4.

The protein resides in the nucleus. Could play a role in neuronal development. The polypeptide is Cysteine and glycine-rich protein 1 (CSRP1) (Pongo abelii (Sumatran orangutan)).